A 1012-amino-acid chain; its full sequence is Structural polyprotein (1012 aa).

Asp-30 contributes to the a divalent metal cation binding site. Residues 513–755 (ADKGYEVVAN…AGRQYHLAMA (243 aa)) enclose the Peptidase S50 domain. Ser-652 functions as the Nucleophile in the catalytic mechanism. Lys-692 is a catalytic residue. Positions 970–1012 (MEMKHRNPRRALPKPKPKPNAPTQRPPGRLGRWIRTVSDEDLE) are disordered. Basic residues predominate over residues 975–986 (RNPRRALPKPKP). The interval 1003-1012 (IRTVSDEDLE) is interaction with VP1 protein.

Homotrimer. A central divalent metal stabilizes the VP2 trimer. Interacts with host ITGA4/ITGB1. As to quaternary structure, homodimer. Interacts (via C-terminus) with VP1 in the cytoplasm. Interacts with VP2. Post-translationally, specific enzymatic cleavages yield mature proteins. The capsid assembly seems to be regulated by polyprotein processing. The protease VP4 cleaves itself off the polyprotein, thus releasing pre-VP2 and VP3 within the infected cell. During capsid assembly, the C-terminus of pre-VP2 is further processed by VP4, giving rise to VP2, the external capsid protein and three small peptides that all stay closely associated with the capsid.

It is found in the virion. The protein localises to the host cytoplasm. Its function is as follows. Capsid protein VP2 self assembles to form an icosahedral capsid with a T=13 symmetry, about 70 nm in diameter, and consisting of 260 VP2 trimers. The capsid encapsulates the genomic dsRNA. VP2 is also involved in attachment and entry into the host cell by interacting with host ITGA4/ITGB1. Functionally, the precursor of VP2 plays an important role in capsid assembly. First, pre-VP2 and VP2 oligomers assemble to form a procapsid. Then, the pre-VP2 intermediates may be processed into VP2 proteins by proteolytic cleavage mediated by VP4 to obtain the mature virion. The final capsid is composed of pentamers and hexamers but VP2 has a natural tendency to assemble into all-pentameric structures. Therefore pre-VP2 may be required to allow formation of the hexameric structures. In terms of biological role, protease VP4 is a serine protease that cleaves the polyprotein into its final products. Pre-VP2 is first partially cleaved, and may be completely processed by VP4 upon capsid maturation. Capsid protein VP3 plays a key role in virion assembly by providing a scaffold for the capsid made of VP2. May self-assemble to form a T=4-like icosahedral inner-capsid composed of at least 180 trimers. Plays a role in genomic RNA packaging by recruiting VP1 into the capsid and interacting with the dsRNA genome segments to form a ribonucleoprotein complex. Additionally, the interaction of the VP3 C-terminal tail with VP1 removes the inherent structural blockade of the polymerase active site. Thus, VP3 can also function as a transcriptional activator. Its function is as follows. Structural peptide 1 is a small peptide derived from pre-VP2 C-terminus. It destabilizes and perforates cell membranes, suggesting a role during entry. Functionally, structural peptide 2 is a small peptide derived from pVP2 C-terminus. It is not essential for the virus viability, but viral growth is affected when missing. In terms of biological role, structural peptide 3 is a small peptide derived from pVP2 C-terminus. It is not essential for the virus viability, but viral growth is affected when missing. Structural peptide 4 is a small peptide derived from pVP2 C-terminus. It is essential for the virus viability. This Avian infectious bursal disease virus (strain Chicken/Cuba/Soroa/1998) (IBDV) protein is Structural polyprotein.